A 492-amino-acid polypeptide reads, in one-letter code: Protein nucleotidyltransferase YdiU (492 aa).

8 residues coordinate ATP: G88, G90, R91, K111, D123, G124, R174, and R181. Catalysis depends on D250, which acts as the Proton acceptor. Positions 251 and 260 each coordinate Mg(2+). D260 serves as a coordination point for ATP.

The protein belongs to the SELO family. It depends on Mg(2+) as a cofactor. Mn(2+) serves as cofactor.

The catalysed reaction is L-seryl-[protein] + ATP = 3-O-(5'-adenylyl)-L-seryl-[protein] + diphosphate. The enzyme catalyses L-threonyl-[protein] + ATP = 3-O-(5'-adenylyl)-L-threonyl-[protein] + diphosphate. It catalyses the reaction L-tyrosyl-[protein] + ATP = O-(5'-adenylyl)-L-tyrosyl-[protein] + diphosphate. It carries out the reaction L-histidyl-[protein] + UTP = N(tele)-(5'-uridylyl)-L-histidyl-[protein] + diphosphate. The catalysed reaction is L-seryl-[protein] + UTP = O-(5'-uridylyl)-L-seryl-[protein] + diphosphate. The enzyme catalyses L-tyrosyl-[protein] + UTP = O-(5'-uridylyl)-L-tyrosyl-[protein] + diphosphate. Its function is as follows. Nucleotidyltransferase involved in the post-translational modification of proteins. It can catalyze the addition of adenosine monophosphate (AMP) or uridine monophosphate (UMP) to a protein, resulting in modifications known as AMPylation and UMPylation. The protein is Protein nucleotidyltransferase YdiU of Rhodopseudomonas palustris (strain BisB5).